Reading from the N-terminus, the 171-residue chain is Putative MucR family transcriptional regulatory protein y4pD (171 aa).

This sequence belongs to the ros/MucR family.

The polypeptide is Putative MucR family transcriptional regulatory protein y4pD (Sinorhizobium fredii (strain NBRC 101917 / NGR234)).